The sequence spans 447 residues: GTPase Der (447 aa).

2 consecutive EngA-type G domains span residues 4-165 and 180-357; these read KIIA…PEEE and LQIV…KIWN. GTP contacts are provided by residues 10 to 17, 57 to 61, 119 to 122, 186 to 193, 233 to 237, and 298 to 301; these read GRPNVGKS, DTPGL, NKCE, GRPNAGKS, DTAGL, and NKWD. Residues 358-443 enclose the KH-like domain; it reads KKIATSKLNE…PIRFTYVKTK (86 aa).

The protein belongs to the TRAFAC class TrmE-Era-EngA-EngB-Septin-like GTPase superfamily. EngA (Der) GTPase family. In terms of assembly, associates with the 50S ribosomal subunit.

Functionally, GTPase that plays an essential role in the late steps of ribosome biogenesis. In Rickettsia akari (strain Hartford), this protein is GTPase Der.